We begin with the raw amino-acid sequence, 229 residues long: Octanoyltransferase (229 aa).

Residues 45 to 220 form the BPL/LPL catalytic domain; sequence ATAVDELWVV…ELARQFCFVL (176 aa). Residues 84 to 91, 151 to 153, and 164 to 166 contribute to the substrate site; these read RGGQVTYH, ALG, and GVA. The active-site Acyl-thioester intermediate is Cys182.

This sequence belongs to the LipB family.

The protein resides in the cytoplasm. It catalyses the reaction octanoyl-[ACP] + L-lysyl-[protein] = N(6)-octanoyl-L-lysyl-[protein] + holo-[ACP] + H(+). Its pathway is protein modification; protein lipoylation via endogenous pathway; protein N(6)-(lipoyl)lysine from octanoyl-[acyl-carrier-protein]: step 1/2. Its function is as follows. Catalyzes the transfer of endogenously produced octanoic acid from octanoyl-acyl-carrier-protein onto the lipoyl domains of lipoate-dependent enzymes. Lipoyl-ACP can also act as a substrate although octanoyl-ACP is likely to be the physiological substrate. The chain is Octanoyltransferase from Xylella fastidiosa (strain 9a5c).